The primary structure comprises 280 residues: Four and a half LIM domains protein 3 (280 aa).

An N-acetylserine modification is found at Ser2. The segment at 7 to 31 (CAKCSESLYGRKYIQTDDGPYCVPC) adopts a C4-type zinc-finger fold. LIM zinc-binding domains are found at residues 40–92 (CAEC…CNDC) and 101–153 (CSAC…CVPC). At Lys157 the chain carries N6-acetyllysine. 2 LIM zinc-binding domains span residues 162–212 (CARC…CVTC) and 221–275 (CSSC…CQGC). Lys235 carries the post-translational modification N6-acetyllysine.

As to quaternary structure, interacts with SOX15; the interaction recruits FHL3 to FOXK1 promoters where it acts as a transcriptional coactivator of FOXK1.

It localises to the nucleus. Its subcellular location is the cytoplasm. Functionally, recruited by SOX15 to FOXK1 promoters where it acts as a transcriptional coactivator of FOXK1. The sequence is that of Four and a half LIM domains protein 3 (FHL3) from Bos taurus (Bovine).